Reading from the N-terminus, the 263-residue chain is Ycf3-interacting protein 1, chloroplastic (263 aa).

A chloroplast-targeting transit peptide spans Met1 to Tyr71. A helical membrane pass occupies residues Ala238–Phe258.

Belongs to the Y3IP1/CEST family. As to quaternary structure, interacts with Ycf3.

The protein localises to the plastid. It localises to the chloroplast thylakoid membrane. Nuclear genome-encoded factor that participates in photosystem I (PSI) biogenesis. Cooperates with the plastid genome-encoded protein PSI assembly Ycf3 in the assembly of stable PSI units in the thylakoid membrane. The sequence is that of Ycf3-interacting protein 1, chloroplastic from Nicotiana tabacum (Common tobacco).